The following is a 251-amino-acid chain: Capsid protein (251 aa).

Residues 1–35 (MPKRDAPWRHMAGTSKVSRSGNYSPSGGMGSKSNK) are disordered. A Bipartite nuclear localization signal motif is present at residues 3–20 (KRDAPWRHMAGTSKVSRS). The span at 15–35 (SKVSRSGNYSPSGGMGSKSNK) shows a compositional bias: polar residues. A Nuclear localization signal motif is present at residues 35-49 (KANAWVNRPMYRKPR). A zinc finger lies at 54–71 (YKSPDVPKGCEGPCKVQS). The Nuclear export signal motif lies at 96–117 (ITHRVGKRFCVKSVYILGKIWM). The Bipartite nuclear localization signal motif lies at 195-242 (RRFWKVNNHVVYNHQEAGKYENHTENALLLYMACTHASNPVYATLKIR).

It belongs to the geminiviridae capsid protein family. As to quaternary structure, homomultimer. Binds to single-stranded and double-stranded viral DNA. Interacts (via nuclear localization signals) with host importin alpha-1a.

The protein localises to the virion. The protein resides in the host nucleus. In terms of biological role, encapsidates the viral DNA into characteristic twinned ('geminate') particles. Binds the genomic viral ssDNA and shuttles it into and out of the cell nucleus. The CP of bipartite geminiviruses is not required for cell-to-cell or systemic movement. This chain is Capsid protein, found in Macroptilium lathyroides (Lima bean).